We begin with the raw amino-acid sequence, 61 residues long: MAVPKRKTSPSKRGMRRSADALKAPTYVEDKDSGELRRPHHIDLKTGMYRGRSVLTPKNSG.

Residues 1–16 (MAVPKRKTSPSKRGMR) are compositionally biased toward basic residues. The segment at 1–61 (MAVPKRKTSP…RSVLTPKNSG (61 aa)) is disordered. The segment covering 28–44 (VEDKDSGELRRPHHIDL) has biased composition (basic and acidic residues).

It belongs to the bacterial ribosomal protein bL32 family.

The polypeptide is Large ribosomal subunit protein bL32 (Bartonella bacilliformis (strain ATCC 35685 / KC583 / Herrer 020/F12,63)).